We begin with the raw amino-acid sequence, 145 residues long: Ribonuclease H (145 aa).

The 141-residue stretch at 1–141 folds into the RNase H type-1 domain; it reads MQEVTIYSDG…ADALANRGVE (141 aa). Residues D9, E47, D69, and D133 each coordinate Mg(2+).

It belongs to the RNase H family. Monomer. It depends on Mg(2+) as a cofactor.

The protein localises to the cytoplasm. The catalysed reaction is Endonucleolytic cleavage to 5'-phosphomonoester.. Its function is as follows. Endonuclease that specifically degrades the RNA of RNA-DNA hybrids. The chain is Ribonuclease H from Cupriavidus necator (strain ATCC 17699 / DSM 428 / KCTC 22496 / NCIMB 10442 / H16 / Stanier 337) (Ralstonia eutropha).